A 250-amino-acid polypeptide reads, in one-letter code: Aquaporin SIP2-1 (250 aa).

The next 2 membrane-spanning stretches (helical) occupy residues 14-34 and 55-75; these read PWLVVGDLVVAAMWVCAGALV and VALSLVYMFFFAWLEGFTGGA. An NPA 1 motif is present at residues 78–80; the sequence is NPL. The next 4 membrane-spanning stretches (helical) occupy residues 95–115, 132–152, 178–200, and 211–231; these read LYLFAAFVRMPAQVFGSILGV, SVGVHHGALAEGLATFMVVIV, FHLLSSDITGGVMNPASAFAWAY, and LLVYWLAPLQATLLGVWVVTL. The NPA 2 motif lies at 191-193; that stretch reads NPA.

It belongs to the MIP/aquaporin (TC 1.A.8) family. SIP (TC 1.A.8.10) subfamily. In terms of tissue distribution, expressed in leaves and anthers, and at lower levels in roots.

The protein localises to the membrane. Aquaporins facilitate the transport of water and small neutral solutes across cell membranes. The polypeptide is Aquaporin SIP2-1 (SIP2-1) (Oryza sativa subsp. japonica (Rice)).